A 36-amino-acid chain; its full sequence is Photosystem I reaction center subunit VIII (36 aa).

Residues 1-21 (MITFSFPSIFVPLVGLVFPAI) traverse the membrane as a helical segment.

The protein belongs to the PsaI family.

The protein localises to the plastid. It is found in the chloroplast thylakoid membrane. Its function is as follows. May help in the organization of the PsaL subunit. In Coffea arabica (Arabian coffee), this protein is Photosystem I reaction center subunit VIII.